A 282-amino-acid chain; its full sequence is Osteoclast-associated immunoglobulin-like receptor (282 aa).

The N-terminal stretch at 1-18 is a signal peptide; the sequence is MALVLILQLLTLWPLCHT. 2 Ig-like domains span residues 22 to 116 and 126 to 219; these read PSVP…SQPS and ELPR…SWEG. N48 is a glycosylation site (N-linked (GlcNAc...) asparagine). Residues C53 and C100 are joined by a disulfide bond. N145 is a glycosylation site (N-linked (GlcNAc...) asparagine). The disordered stretch occupies residues 221-282; sequence GPEARPASSA…PAPPPSDPGV (62 aa). Pro residues predominate over residues 273 to 282; the sequence is PAPPPSDPGV.

The protein belongs to the leukocyte receptor complex/polymeric immunoglobulin receptor (PIR/LRC) family.

It localises to the secreted. The protein resides in the cell membrane. In terms of biological role, regulator of osteoclastogenesis which plays an important bone-specific function in osteoclast differentiation. The sequence is that of Osteoclast-associated immunoglobulin-like receptor (OSCAR) from Homo sapiens (Human).